Consider the following 678-residue polypeptide: Protein CASP (678 aa).

The Cytoplasmic segment spans residues 1–619 (MAANVGSMFQ…LVLSNKMART (619 aa)). 2 coiled-coil regions span residues 67–450 (LLKS…QDLS) and 502–556 (LSII…FLQS). A Phosphoserine modification is found at Ser586. The chain crosses the membrane as a helical; Anchor for type IV membrane protein span at residues 620–640 (IGFFYTLFLHCLVFLVLYKLA). Residues 641–678 (WSESMERDCATFCAKKFADHLHKFHENDNGAAAGDLWQ) are Lumenal-facing.

The protein belongs to the CASP family. In terms of assembly, homodimer; disulfide-linked. Interacts with GOLGA5.

The protein resides in the golgi apparatus membrane. In terms of biological role, may be involved in intra-Golgi retrograde transport. The protein is Protein CASP (CUTL1) of Pongo abelii (Sumatran orangutan).